Here is a 219-residue protein sequence, read N- to C-terminus: Pyridoxine/pyridoxamine 5'-phosphate oxidase (219 aa).

Substrate is bound by residues 15 to 18 (RRDY) and K73. Residues 68 to 73 (RMVLLK), 83 to 84 (YT), R89, K90, and Q112 contribute to the FMN site. Substrate contacts are provided by Y130, R134, and S138. FMN contacts are provided by residues 147–148 (QS) and W192. 198–200 (RLH) is a binding site for substrate. FMN is bound at residue R202.

This sequence belongs to the pyridoxamine 5'-phosphate oxidase family. As to quaternary structure, homodimer. FMN is required as a cofactor.

The enzyme catalyses pyridoxamine 5'-phosphate + O2 + H2O = pyridoxal 5'-phosphate + H2O2 + NH4(+). It carries out the reaction pyridoxine 5'-phosphate + O2 = pyridoxal 5'-phosphate + H2O2. The protein operates within cofactor metabolism; pyridoxal 5'-phosphate salvage; pyridoxal 5'-phosphate from pyridoxamine 5'-phosphate: step 1/1. It participates in cofactor metabolism; pyridoxal 5'-phosphate salvage; pyridoxal 5'-phosphate from pyridoxine 5'-phosphate: step 1/1. In terms of biological role, catalyzes the oxidation of either pyridoxine 5'-phosphate (PNP) or pyridoxamine 5'-phosphate (PMP) into pyridoxal 5'-phosphate (PLP). The protein is Pyridoxine/pyridoxamine 5'-phosphate oxidase of Acaryochloris marina (strain MBIC 11017).